The primary structure comprises 347 residues: Secretory carrier-associated membrane protein 3 (347 aa).

Positions 1-88 (MAQSRDGGNP…EPKNYGSYST (88 aa)) are disordered. Residues 1 to 170 (MAQSRDGGNP…QKTVSTMYYL (170 aa)) lie on the Cytoplasmic side of the membrane. S32 is modified (phosphoserine). T37 carries the phosphothreonine modification. Y41 and Y53 each carry phosphotyrosine. A compositionally biased stretch (pro residues) spans 49-66 (PPPAYEPPAPAPLPPPSA). Phosphoserine is present on residues S72 and S76. Position 83 is a phosphotyrosine (Y83). A Phosphoserine modification is found at S85. The next 4 helical transmembrane spans lie at 171-191 (WMCS…SFCV), 197-217 (AGFG…FVCW), 247-267 (FVLQ…SALV), and 277-297 (VLML…IVML). Residues 298 to 347 (KRIHSLYRRTGASFQKAQQEFAAGVFSNPAVRTAAANAAAGAAENAFRAP) lie on the Cytoplasmic side of the membrane. A Glycyl lysine isopeptide (Lys-Gly) (interchain with G-Cter in SUMO1) cross-link involves residue K313.

The protein belongs to the SCAMP family. In terms of assembly, interacts with NEDD4, NEDD4L and TSG101. Interacts with RNF126. In terms of processing, monoubiquitinated. In terms of tissue distribution, widely expressed, with highest expression in heart and skeletal muscle.

It is found in the membrane. Its function is as follows. Functions in post-Golgi recycling pathways. Acts as a recycling carrier to the cell surface. The sequence is that of Secretory carrier-associated membrane protein 3 (SCAMP3) from Homo sapiens (Human).